The primary structure comprises 63 residues: Conotoxin Vi5.1a (63 aa).

An N-terminal signal peptide occupies residues 1-22; it reads MRCVPVFIILLLLIPSAPSADA. A propeptide spanning residues 23–50 is cleaved from the precursor; sequence QPKTKDDVPLASYHDNAERTLQRLWNQR. At Pro62 the chain carries Proline amide.

It belongs to the conotoxin T superfamily. Post-translationally, contains 2 disulfide bonds that can be either 'C1-C3, C2-C4' or 'C1-C4, C2-C3', since these disulfide connectivities have been observed for conotoxins with cysteine framework V (for examples, see AC P0DQQ7 and AC P81755). Expressed by the venom duct.

Its subcellular location is the secreted. The chain is Conotoxin Vi5.1a from Conus virgo (Virgin cone).